The following is a 169-amino-acid chain: Putative hydrogenase maturation protease MJ0631 (169 aa).

Belongs to the peptidase A31 family.

The polypeptide is Putative hydrogenase maturation protease MJ0631 (Methanocaldococcus jannaschii (strain ATCC 43067 / DSM 2661 / JAL-1 / JCM 10045 / NBRC 100440) (Methanococcus jannaschii)).